Reading from the N-terminus, the 441-residue chain is Maltokinase (441 aa).

This sequence belongs to the aminoglycoside phosphotransferase family. Monomer.

It carries out the reaction D-maltose + ATP = alpha-maltose 1-phosphate + ADP + H(+). It functions in the pathway glycan biosynthesis; glycogen biosynthesis. Functionally, catalyzes the ATP-dependent phosphorylation of maltose to maltose 1-phosphate. Is involved in a branched alpha-glucan biosynthetic pathway from trehalose, together with TreS, GlgE and GlgB. The sequence is that of Maltokinase (mak) from Mycolicibacterium vanbaalenii (strain DSM 7251 / JCM 13017 / BCRC 16820 / KCTC 9966 / NRRL B-24157 / PYR-1) (Mycobacterium vanbaalenii).